Reading from the N-terminus, the 396-residue chain is Tryptophan synthase beta chain (396 aa).

Lys86 carries the N6-(pyridoxal phosphate)lysine modification.

The protein belongs to the TrpB family. In terms of assembly, tetramer of two alpha and two beta chains. Pyridoxal 5'-phosphate is required as a cofactor.

The enzyme catalyses (1S,2R)-1-C-(indol-3-yl)glycerol 3-phosphate + L-serine = D-glyceraldehyde 3-phosphate + L-tryptophan + H2O. It functions in the pathway amino-acid biosynthesis; L-tryptophan biosynthesis; L-tryptophan from chorismate: step 5/5. In terms of biological role, the beta subunit is responsible for the synthesis of L-tryptophan from indole and L-serine. This is Tryptophan synthase beta chain from Sodalis glossinidius (strain morsitans).